Reading from the N-terminus, the 422-residue chain is p-hydroxyphenylacetate 3-hydroxylase, oxygenase component (422 aa).

W112 contributes to the FMN binding site. Positions 120 and 146 each coordinate substrate. Residues 146-148 (SSI) and 169-171 (WSS) each bind FMN. 263–266 (RPYF) provides a ligand contact to substrate. FMN-binding positions include R292, Y296, 374–375 (AT), and 396–397 (HA). Y296 provides a ligand contact to substrate.

It belongs to the HpaH/HsaA monooxygenase family. As to quaternary structure, homotetramer. The p-hydroxyphenylacetate 3-hydroxylase (HpaH) is composed of an oxygenase component C2 and a reductase component C1.

It catalyses the reaction 4-hydroxyphenylacetate + FMNH2 + O2 = 3,4-dihydroxyphenylacetate + FMN + H2O + H(+). The catalysed reaction is 4-hydroxyphenylacetate + FADH2 + O2 = 3,4-dihydroxyphenylacetate + FAD + H2O + H(+). It participates in aromatic compound metabolism; 4-hydroxyphenylacetate degradation; pyruvate and succinate semialdehyde from 4-hydroxyphenylacetate: step 1/7. Its activity is regulated as follows. Inhibited by flavin concentrations greater than 15 uM. Also inhibited by excess p-hydroxyphenylacetate (HPA). Oxygenase component of a two-component system that utilizes reduced FMN (FMNH2) supplied by the reductase component to catalyze the hydroxylation of 4-hydroxyphenylacetic acid, leading to the production of 3,4-dihydroxyphenylacetate (3,4-DHPA). Also utilizes other reduced flavins such as FADH2 and reduced riboflavin to a lesser extent. Only the compounds with a hydroxyl group in the para (p-) position can be hydroxylated. May also oxidize phenol to catechol, and hydroxylate other phenol derivatives. The protein is p-hydroxyphenylacetate 3-hydroxylase, oxygenase component of Acinetobacter baumannii.